A 590-amino-acid chain; its full sequence is V-type ATP synthase alpha chain (590 aa).

231–238 provides a ligand contact to ATP; it reads GPFGSGKT.

This sequence belongs to the ATPase alpha/beta chains family.

It carries out the reaction ATP + H2O + 4 H(+)(in) = ADP + phosphate + 5 H(+)(out). Its function is as follows. Produces ATP from ADP in the presence of a proton gradient across the membrane. The V-type alpha chain is a catalytic subunit. The polypeptide is V-type ATP synthase alpha chain (Clostridium botulinum (strain Langeland / NCTC 10281 / Type F)).